The following is a 108-amino-acid chain: UPF0102 protein Shewmr4_3685 (108 aa).

This sequence belongs to the UPF0102 family.

In Shewanella sp. (strain MR-4), this protein is UPF0102 protein Shewmr4_3685.